Here is a 117-residue protein sequence, read N- to C-terminus: Putative iron-sulfur cluster insertion protein ErpA (117 aa).

Iron-sulfur cluster contacts are provided by C45, C109, and C111.

This sequence belongs to the HesB/IscA family. Homodimer. Iron-sulfur cluster serves as cofactor.

In terms of biological role, required for insertion of 4Fe-4S clusters. This chain is Putative iron-sulfur cluster insertion protein ErpA, found in Methylobacillus flagellatus (strain ATCC 51484 / DSM 6875 / VKM B-1610 / KT).